A 51-amino-acid polypeptide reads, in one-letter code: Ribosome biogenesis protein Nop10 (51 aa).

This sequence belongs to the NOP10 family.

Its function is as follows. Involved in ribosome biogenesis; more specifically in 18S rRNA pseudouridylation and in cleavage of pre-rRNA. The protein is Ribosome biogenesis protein Nop10 of Methanosarcina barkeri (strain Fusaro / DSM 804).